A 147-amino-acid polypeptide reads, in one-letter code: Basic phospholipase A2 beta-bungarotoxin A1 chain (147 aa).

Positions 1-19 (MNPAHLLVLSAVCVSLLGA) are cleaved as a signal peptide. Positions 20–27 (ANIPPHPL) are excised as a propeptide. 6 cysteine pairs are disulfide-bonded: Cys54-Cys146, Cys56-Cys72, Cys71-Cys127, Cys78-Cys120, Cys88-Cys113, and Cys106-Cys118. Residues Tyr55, Gly57, and Gly59 each contribute to the Ca(2+) site. Residue His75 is part of the active site. Asp76 is a Ca(2+) binding site. The active site involves Asp121.

This sequence belongs to the phospholipase A2 family. Group I subfamily. D49 sub-subfamily. Heterodimer; disulfide-linked. The A chains have phospholipase A2 activity and the B chains show homology with the basic protease inhibitors. The A1 chain is found in beta-1 and beta-2 bungarotoxins. The cofactor is Ca(2+). As to expression, expressed by the venom gland.

The protein resides in the secreted. The enzyme catalyses a 1,2-diacyl-sn-glycero-3-phosphocholine + H2O = a 1-acyl-sn-glycero-3-phosphocholine + a fatty acid + H(+). Its function is as follows. Snake venom phospholipase A2 (PLA2) that inhibits neuromuscular transmission by blocking acetylcholine release from the nerve termini. PLA2 catalyzes the calcium-dependent hydrolysis of the 2-acyl groups in 3-sn-phosphoglycerides. In Bungarus multicinctus (Many-banded krait), this protein is Basic phospholipase A2 beta-bungarotoxin A1 chain.